The chain runs to 64 residues: DNA-directed RNA polymerase subunit omega (64 aa).

This sequence belongs to the RNA polymerase subunit omega family. As to quaternary structure, the RNAP catalytic core consists of 2 alpha, 1 beta, 1 beta' and 1 omega subunit. When a sigma factor is associated with the core the holoenzyme is formed, which can initiate transcription.

It catalyses the reaction RNA(n) + a ribonucleoside 5'-triphosphate = RNA(n+1) + diphosphate. Its function is as follows. Promotes RNA polymerase assembly. Latches the N- and C-terminal regions of the beta' subunit thereby facilitating its interaction with the beta and alpha subunits. The polypeptide is DNA-directed RNA polymerase subunit omega (Oceanobacillus iheyensis (strain DSM 14371 / CIP 107618 / JCM 11309 / KCTC 3954 / HTE831)).